We begin with the raw amino-acid sequence, 193 residues long: Anthranilate synthase component 2 (193 aa).

One can recognise a Glutamine amidotransferase type-1 domain in the interval 3-193 (NILFLDNFDS…QQSIEWLLNR (191 aa)). L-glutamine is bound at residue 57 to 59 (GPG). Cys84 functions as the Nucleophile; for GATase activity in the catalytic mechanism. L-glutamine-binding positions include Gln88 and 134–135 (SL). Residues His170 and Glu172 each act as for GATase activity in the active site.

Heterotetramer consisting of two non-identical subunits: a beta subunit (TrpG) and a large alpha subunit (TrpE).

The catalysed reaction is chorismate + L-glutamine = anthranilate + pyruvate + L-glutamate + H(+). It functions in the pathway amino-acid biosynthesis; L-tryptophan biosynthesis; L-tryptophan from chorismate: step 1/5. Its function is as follows. Part of a heterotetrameric complex that catalyzes the two-step biosynthesis of anthranilate, an intermediate in the biosynthesis of L-tryptophan. In the first step, the glutamine-binding beta subunit (TrpG) of anthranilate synthase (AS) provides the glutamine amidotransferase activity which generates ammonia as a substrate that, along with chorismate, is used in the second step, catalyzed by the large alpha subunit of AS (TrpE) to produce anthranilate. In the absence of TrpG, TrpE can synthesize anthranilate directly from chorismate and high concentrations of ammonia. In Haemophilus influenzae (strain ATCC 51907 / DSM 11121 / KW20 / Rd), this protein is Anthranilate synthase component 2 (trpG).